The following is a 166-amino-acid chain: NADH-quinone oxidoreductase subunit E (166 aa).

Residues Cys92, Cys97, Cys133, and Cys137 each contribute to the [2Fe-2S] cluster site.

This sequence belongs to the complex I 24 kDa subunit family. In terms of assembly, composed of 13 different subunits. Subunits NuoCD, E, F, and G constitute the peripheral sector of the complex. [2Fe-2S] cluster serves as cofactor.

It catalyses the reaction a quinone + NADH + 5 H(+)(in) = a quinol + NAD(+) + 4 H(+)(out). NDH-1 shuttles electrons from NADH, via FMN and iron-sulfur (Fe-S) centers, to quinones in the respiratory chain. The immediate electron acceptor for the enzyme in this species is believed to be ubiquinone. Couples the redox reaction to proton translocation (for every two electrons transferred, four hydrogen ions are translocated across the cytoplasmic membrane), and thus conserves the redox energy in a proton gradient. In Salmonella typhi, this protein is NADH-quinone oxidoreductase subunit E (nuoE).